The following is an 806-amino-acid chain: Leucine--tRNA ligase (806 aa).

The 'HIGH' region motif lies at 40–51 (PYPSGQGLHVGH). The 'KMSKS' region motif lies at 578–582 (KMSKS). ATP is bound at residue lysine 581.

It belongs to the class-I aminoacyl-tRNA synthetase family.

Its subcellular location is the cytoplasm. It catalyses the reaction tRNA(Leu) + L-leucine + ATP = L-leucyl-tRNA(Leu) + AMP + diphosphate. The chain is Leucine--tRNA ligase from Limosilactobacillus reuteri (strain DSM 20016) (Lactobacillus reuteri).